The primary structure comprises 219 residues: Probable GTP-binding protein EngB (219 aa).

The region spanning 31–205 (VGVEIAFAGR…LSILNEWCHP (175 aa)) is the EngB-type G domain. GTP-binding positions include 39–46 (GRSNAGKS), 66–70 (GRTQL), 84–87 (DLPG), 151–154 (TKSD), and 184–186 (FSA). Residues S46 and T68 each coordinate Mg(2+).

Belongs to the TRAFAC class TrmE-Era-EngA-EngB-Septin-like GTPase superfamily. EngB GTPase family. The cofactor is Mg(2+).

Functionally, necessary for normal cell division and for the maintenance of normal septation. This chain is Probable GTP-binding protein EngB, found in Shewanella sp. (strain MR-7).